Consider the following 350-residue polypeptide: Very-long-chain 3-oxoacyl-CoA reductase (350 aa).

A helical membrane pass occupies residues 28–48 (SLVLLAGIGALSVGTFALRLV). Residues Val-79, Asp-134, Asn-161, Lys-196, Tyr-228, Lys-232, Val-261, and Ser-263 each coordinate NADP(+). Catalysis depends on Tyr-228, which acts as the Proton donor. Lys-232 serves as the catalytic Lowers pKa of active site Tyr.

Belongs to the short-chain dehydrogenases/reductases (SDR) family.

It localises to the endoplasmic reticulum membrane. It catalyses the reaction a very-long-chain (3R)-3-hydroxyacyl-CoA + NADP(+) = a very-long-chain 3-oxoacyl-CoA + NADPH + H(+). It participates in lipid metabolism; fatty acid biosynthesis. Functionally, component of the microsomal membrane bound fatty acid elongation system, which produces the 26-carbon very long-chain fatty acids (VLCFA) from palmitate. Catalyzes the reduction of the 3-ketoacyl-CoA intermediate that is formed in each cycle of fatty acid elongation. VLCFAs serve as precursors for ceramide and sphingolipids. This chain is Very-long-chain 3-oxoacyl-CoA reductase, found in Mycosarcoma maydis (Corn smut fungus).